Consider the following 284-residue polypeptide: Four and a half LIM domains protein 5 (284 aa).

The C4-type zinc-finger motif lies at 8-32 (CQYCTASLLGKKYVLKDDNLYCISC). LIM zinc-binding domains follow at residues 39-100 (NYCE…ECSS), 101-160 (KCFH…KEFA), 161-220 (HYCN…LYAK), and 221-283 (KCAA…ADTD).

In terms of assembly, interacts with CREM (via the third LIM domain). Interacts (via second LIM domain) with SPAG8.

It localises to the nucleus. In terms of biological role, may be involved in the regulation of spermatogenesis. Stimulates CREM transcriptional activity in a phosphorylation-independent manner. This Rattus norvegicus (Rat) protein is Four and a half LIM domains protein 5 (Fhl5).